Consider the following 226-residue polypeptide: 7-cyano-7-deazaguanine synthase (226 aa).

9–19 (LSGGLDSATVL) serves as a coordination point for ATP. Residues Cys-189, Cys-199, Cys-202, and Cys-205 each contribute to the Zn(2+) site.

The protein belongs to the QueC family. Zn(2+) is required as a cofactor.

The enzyme catalyses 7-carboxy-7-deazaguanine + NH4(+) + ATP = 7-cyano-7-deazaguanine + ADP + phosphate + H2O + H(+). Its pathway is purine metabolism; 7-cyano-7-deazaguanine biosynthesis. Functionally, catalyzes the ATP-dependent conversion of 7-carboxy-7-deazaguanine (CDG) to 7-cyano-7-deazaguanine (preQ(0)). This Cupriavidus pinatubonensis (strain JMP 134 / LMG 1197) (Cupriavidus necator (strain JMP 134)) protein is 7-cyano-7-deazaguanine synthase.